The following is a 229-amino-acid chain: Putative ankyrin repeat protein L148 (229 aa).

4 ANK repeats span residues 70–95 (ILDY…PDNY), 96–126 (IGTE…DLRI), 127–156 (NNDY…NCQA), and 157–186 (YNNA…SVAA).

The polypeptide is Putative ankyrin repeat protein L148 (Acanthamoeba polyphaga (Amoeba)).